An 86-amino-acid polypeptide reads, in one-letter code: Insulin (86 aa).

3 disulfides stabilise this stretch: C7/C72, C19/C85, and C71/C76. Positions 33-63 are cleaved as a propeptide — c peptide; it reads EAEDPQVGEVELGGGPGLGGLQPLALAGPQQ.

This sequence belongs to the insulin family. In terms of assembly, heterodimer of a B chain and an A chain linked by two disulfide bonds.

It localises to the secreted. Insulin decreases blood glucose concentration. It increases cell permeability to monosaccharides, amino acids and fatty acids. It accelerates glycolysis, the pentose phosphate cycle, and glycogen synthesis in liver. The chain is Insulin (INS) from Equus caballus (Horse).